The sequence spans 273 residues: ATP synthase F(1) complex subunit gamma, mitochondrial (273 aa).

K14 is subject to N6-acetyllysine. The residue at position 24 (K24) is an N6-succinyllysine. At K30 the chain carries N6-acetyllysine. K90 is modified (N6-acetyllysine; alternate). At K90 the chain carries N6-succinyllysine; alternate. An N6-acetyllysine modification is found at K113. Phosphoserine is present on S121. N6-acetyllysine; alternate is present on K129. K129 carries the N6-succinyllysine; alternate modification. Position 172 is an N6-acetyllysine (K172). K245 is subject to N6-succinyllysine.

It belongs to the ATPase gamma chain family. Component of the ATP synthase complex composed at least of ATP5F1A/subunit alpha, ATP5F1B/subunit beta, ATP5MC1/subunit c (homooctomer), MT-ATP6/subunit a, MT-ATP8/subunit 8, ATP5ME/subunit e, ATP5MF/subunit f, ATP5MG/subunit g, ATP5MK/subunit k, ATP5MJ/subunit j, ATP5F1C/subunit gamma, ATP5F1D/subunit delta, ATP5F1E/subunit epsilon, ATP5PF/subunit F6, ATP5PB/subunit b, ATP5PD/subunit d, ATP5PO/subunit OSCP. ATP synthase complex consists of a soluble F(1) head domain (subunits alpha(3) and beta(3)) - the catalytic core - and a membrane F(0) domain - the membrane proton channel (subunits c, a, 8, e, f, g, k and j). These two domains are linked by a central stalk (subunits gamma, delta, and epsilon) rotating inside the F1 region and a stationary peripheral stalk (subunits F6, b, d, and OSCP). Interacts with FLVCR2; this interaction occurs in the absence of heme and is disrupted upon heme binding.

The protein resides in the mitochondrion inner membrane. In terms of biological role, subunit gamma, of the mitochondrial membrane ATP synthase complex (F(1)F(0) ATP synthase or Complex V) that produces ATP from ADP in the presence of a proton gradient across the membrane which is generated by electron transport complexes of the respiratory chain. ATP synthase complex consist of a soluble F(1) head domain - the catalytic core - and a membrane F(1) domain - the membrane proton channel. These two domains are linked by a central stalk rotating inside the F(1) region and a stationary peripheral stalk. During catalysis, ATP synthesis in the catalytic domain of F(1) is coupled via a rotary mechanism of the central stalk subunits to proton translocation. In vivo, can only synthesize ATP although its ATP hydrolase activity can be activated artificially in vitro. With the central stalk subunit delta, is essential for the biogenesis of F(1) catalytic part of the ATP synthase complex namely in the formation of F1 assembly intermediate. The chain is ATP synthase F(1) complex subunit gamma, mitochondrial from Rattus norvegicus (Rat).